A 154-amino-acid chain; its full sequence is 6,7-dimethyl-8-ribityllumazine synthase (154 aa).

5-amino-6-(D-ribitylamino)uracil contacts are provided by residues W22, 56–58, and 80–82; these read AWE and CVV. 85-86 contributes to the (2S)-2-hydroxy-3-oxobutyl phosphate binding site; sequence DT. The Proton donor role is filled by H88. Residue N113 coordinates 5-amino-6-(D-ribitylamino)uracil. Position 127 (R127) interacts with (2S)-2-hydroxy-3-oxobutyl phosphate.

This sequence belongs to the DMRL synthase family. As to quaternary structure, forms an icosahedral capsid composed of 60 subunits, arranged as a dodecamer of pentamers.

The catalysed reaction is (2S)-2-hydroxy-3-oxobutyl phosphate + 5-amino-6-(D-ribitylamino)uracil = 6,7-dimethyl-8-(1-D-ribityl)lumazine + phosphate + 2 H2O + H(+). Its pathway is cofactor biosynthesis; riboflavin biosynthesis; riboflavin from 2-hydroxy-3-oxobutyl phosphate and 5-amino-6-(D-ribitylamino)uracil: step 1/2. Catalyzes the formation of 6,7-dimethyl-8-ribityllumazine by condensation of 5-amino-6-(D-ribitylamino)uracil with 3,4-dihydroxy-2-butanone 4-phosphate. This is the penultimate step in the biosynthesis of riboflavin. In Xylella fastidiosa (strain M23), this protein is 6,7-dimethyl-8-ribityllumazine synthase.